The sequence spans 104 residues: Nucleoid-associated protein Moth_0028 (104 aa).

Belongs to the YbaB/EbfC family. Homodimer.

It localises to the cytoplasm. The protein localises to the nucleoid. In terms of biological role, binds to DNA and alters its conformation. May be involved in regulation of gene expression, nucleoid organization and DNA protection. This chain is Nucleoid-associated protein Moth_0028, found in Moorella thermoacetica (strain ATCC 39073 / JCM 9320).